A 601-amino-acid chain; its full sequence is Probable translation initiation factor IF-2 (601 aa).

The region spanning 10-227 (LRAPIVVVLG…VLAGLAQRYL (218 aa)) is the tr-type G domain. The tract at residues 19-26 (GHVDAGKT) is G1. GTP is bound at residue 19–26 (GHVDAGKT). A G2 region spans residues 44 to 48 (TMTQH). The segment at 83 to 86 (DTPG) is G3. Residues 83-87 (DTPGH) and 137-140 (NKID) each bind GTP. Residues 137 to 140 (NKID) form a G4 region. Residues 205-207 (SAV) are G5.

It belongs to the TRAFAC class translation factor GTPase superfamily. Classic translation factor GTPase family. IF-2 subfamily.

Functionally, function in general translation initiation by promoting the binding of the formylmethionine-tRNA to ribosomes. Seems to function along with eIF-2. The protein is Probable translation initiation factor IF-2 of Thermofilum pendens (strain DSM 2475 / Hrk 5).